An 893-amino-acid polypeptide reads, in one-letter code: Alanine--tRNA ligase (893 aa).

Zn(2+) contacts are provided by His-573, His-577, Cys-676, and His-680. A disordered region spans residues 853–872; the sequence is LGGGGGGKDDLAQGGGQDPS.

The protein belongs to the class-II aminoacyl-tRNA synthetase family. It depends on Zn(2+) as a cofactor.

The protein resides in the cytoplasm. It carries out the reaction tRNA(Ala) + L-alanine + ATP = L-alanyl-tRNA(Ala) + AMP + diphosphate. Functionally, catalyzes the attachment of alanine to tRNA(Ala) in a two-step reaction: alanine is first activated by ATP to form Ala-AMP and then transferred to the acceptor end of tRNA(Ala). Also edits incorrectly charged Ser-tRNA(Ala) and Gly-tRNA(Ala) via its editing domain. The protein is Alanine--tRNA ligase of Kineococcus radiotolerans (strain ATCC BAA-149 / DSM 14245 / SRS30216).